Reading from the N-terminus, the 315-residue chain is Taste receptor type 2 member 3 (315 aa).

The Extracellular segment spans residues 1-5; it reads MGLTE. A helical transmembrane segment spans residues 6 to 26; that stretch reads GVFLILSGTQFTLGILVNCFI. The Cytoplasmic portion of the chain corresponds to 27–41; that stretch reads ELVNGSSWFKTKRMS. Residues 42–62 traverse the membrane as a helical segment; the sequence is LSDFIITTLALLRIILLCIIL. Topologically, residues 63–93 are extracellular; it reads TDSFLIEFSPNTHDSGIIMQIIDVSWTFTNH. A helical transmembrane segment spans residues 94 to 114; it reads LSIWLATCLGVLYCLKIASFS. The Cytoplasmic portion of the chain corresponds to 115-127; that stretch reads HPTFLWLKWRVSR. A helical transmembrane segment spans residues 128–148; that stretch reads VMVWMLLGALLLSCGSTASLI. Residues 149 to 185 are Extracellular-facing; it reads NEFKLYSVFRGIEATRNVTEHFRKKRSEYYLIHVLGT. N165 is a glycosylation site (N-linked (GlcNAc...) asparagine). The chain crosses the membrane as a helical span at residues 186–206; it reads LWYLPPLIVSLASYSLLIFSL. The Cytoplasmic segment spans residues 207–233; that stretch reads GRHTRQMLQNGTSSRDPTTEAHKRAIR. A helical membrane pass occupies residues 234-254; it reads IILSFFFLFLLYFLAFLIASF. The Extracellular portion of the chain corresponds to 255-265; the sequence is GNFLPKTKMAK. A helical transmembrane segment spans residues 266–286; that stretch reads MIGEVMTMFYPAGHSFILILG. The Cytoplasmic portion of the chain corresponds to 287-315; sequence NSKLKQTFVVMLRCESGHLKPGSKGPIFS.

This sequence belongs to the G-protein coupled receptor T2R family.

It localises to the membrane. In terms of biological role, gustducin-coupled receptor implicated in the perception of bitter compounds in the oral cavity and the gastrointestinal tract. Signals through PLCB2 and the calcium-regulated cation channel TRPM5. In Gorilla gorilla gorilla (Western lowland gorilla), this protein is Taste receptor type 2 member 3 (TAS2R3).